The sequence spans 289 residues: Probable ABC transporter permease protein BRA0749/BS1330_II0742 (289 aa).

6 helical membrane-spanning segments follow: residues 9–29, 70–90, 99–119, 144–166, 213–233, and 260–280; these read FLIL…VVHL, VWTV…AIIL, VARV…AIVW, IQWL…LVTV, IAIV…WVMT, and EASA…VIYI. One can recognise an ABC transmembrane type-1 domain in the interval 65–279; that stretch reads LWRTAVWTVA…AILLVFTVIY (215 aa).

It belongs to the binding-protein-dependent transport system permease family. In terms of assembly, the complex is composed of two ATP-binding proteins (BRA0745), two transmembrane proteins (BRA0749) and a solute-binding protein (BRA0748).

It is found in the cell inner membrane. In terms of biological role, probably part of an ABC transporter complex. Probably responsible for the translocation of the substrate across the membrane. This Brucella suis biovar 1 (strain 1330) protein is Probable ABC transporter permease protein BRA0749/BS1330_II0742.